The following is a 472-amino-acid chain: Probable low-salt glycan biosynthesis flippase Agl15 (472 aa).

13 helical membrane passes run 8 to 28 (IKLF…ITFF), 38 to 58 (GVFF…DFGL), 77 to 97 (SSAI…IVVF), 109 to 129 (FAVY…AVSV), 164 to 184 (AEAL…WGLS), 209 to 229 (VVSS…IGIF), 244 to 264 (VTAI…PQVS), 289 to 309 (LVIP…GIVF), 315 to 335 (IASY…VHVI), 354 to 374 (VISV…FGIV), 375 to 395 (GAAV…AHYL), 408 to 428 (IGWC…FKTL), and 434 to 454 (LIQL…ITLL).

Belongs to the AglR/Agl15 family.

The protein resides in the cell membrane. Its pathway is protein modification; protein glycosylation. It participates in cell surface structure biogenesis; S-layer biogenesis. Flippase involved in N-glycan biosynthetic pathway that takes place under low-salt conditions (1.75 M instead of 3.4 M). Participates in the formation of the tetrasaccharide present at 'Asn-532' of S-layer glycoprotein Csg, consisting of a sulfated hexose, 2 hexoses and rhamnose. Probably moves the tetrasaccharide from the cytosolic to the extracytosolic side of the membrane. This chain is Probable low-salt glycan biosynthesis flippase Agl15 (agl15), found in Haloferax volcanii (strain ATCC 29605 / DSM 3757 / JCM 8879 / NBRC 14742 / NCIMB 2012 / VKM B-1768 / DS2) (Halobacterium volcanii).